We begin with the raw amino-acid sequence, 251 residues long: DNA repair protein RecO (251 aa).

The protein belongs to the RecO family.

Involved in DNA repair and RecF pathway recombination. The protein is DNA repair protein RecO of Nitratidesulfovibrio vulgaris (strain ATCC 29579 / DSM 644 / CCUG 34227 / NCIMB 8303 / VKM B-1760 / Hildenborough) (Desulfovibrio vulgaris).